We begin with the raw amino-acid sequence, 150 residues long: Protein-export protein SecB (150 aa).

Belongs to the SecB family. As to quaternary structure, homotetramer, a dimer of dimers. One homotetramer interacts with 1 SecA dimer.

Its subcellular location is the cytoplasm. Functionally, one of the proteins required for the normal export of preproteins out of the cell cytoplasm. It is a molecular chaperone that binds to a subset of precursor proteins, maintaining them in a translocation-competent state. It also specifically binds to its receptor SecA. In Acidovorax ebreus (strain TPSY) (Diaphorobacter sp. (strain TPSY)), this protein is Protein-export protein SecB.